Here is a 167-residue protein sequence, read N- to C-terminus: Phosphopantetheine adenylyltransferase (167 aa).

Residue threonine 13 participates in substrate binding. ATP-binding positions include 13-14 (TF) and histidine 21. 3 residues coordinate substrate: lysine 45, leucine 78, and arginine 92. Residues 93–95 (GLR), glutamate 103, and 128–134 (TQFISSS) contribute to the ATP site.

The protein belongs to the bacterial CoaD family. Homohexamer. Mg(2+) is required as a cofactor.

It localises to the cytoplasm. It catalyses the reaction (R)-4'-phosphopantetheine + ATP + H(+) = 3'-dephospho-CoA + diphosphate. Its pathway is cofactor biosynthesis; coenzyme A biosynthesis; CoA from (R)-pantothenate: step 4/5. In terms of biological role, reversibly transfers an adenylyl group from ATP to 4'-phosphopantetheine, yielding dephospho-CoA (dPCoA) and pyrophosphate. The polypeptide is Phosphopantetheine adenylyltransferase (Wolbachia sp. subsp. Brugia malayi (strain TRS)).